The sequence spans 72 residues: Translation initiation factor IF-1 (72 aa).

In terms of domain architecture, S1-like spans 1 to 72 (MAKEESIEIE…TKGRITYRYK (72 aa)).

This sequence belongs to the IF-1 family. As to quaternary structure, component of the 30S ribosomal translation pre-initiation complex which assembles on the 30S ribosome in the order IF-2 and IF-3, IF-1 and N-formylmethionyl-tRNA(fMet); mRNA recruitment can occur at any time during PIC assembly.

It localises to the cytoplasm. Functionally, one of the essential components for the initiation of protein synthesis. Stabilizes the binding of IF-2 and IF-3 on the 30S subunit to which N-formylmethionyl-tRNA(fMet) subsequently binds. Helps modulate mRNA selection, yielding the 30S pre-initiation complex (PIC). Upon addition of the 50S ribosomal subunit IF-1, IF-2 and IF-3 are released leaving the mature 70S translation initiation complex. The polypeptide is Translation initiation factor IF-1 (Chlorobium chlorochromatii (strain CaD3)).